The following is a 143-amino-acid chain: Large ribosomal subunit protein uL11 (143 aa).

The protein belongs to the universal ribosomal protein uL11 family. Part of the ribosomal stalk of the 50S ribosomal subunit. Interacts with L10 and the large rRNA to form the base of the stalk. L10 forms an elongated spine to which L12 dimers bind in a sequential fashion forming a multimeric L10(L12)X complex. One or more lysine residues are methylated.

Functionally, forms part of the ribosomal stalk which helps the ribosome interact with GTP-bound translation factors. This is Large ribosomal subunit protein uL11 from Nitrosomonas europaea (strain ATCC 19718 / CIP 103999 / KCTC 2705 / NBRC 14298).